Here is a 223-residue protein sequence, read N- to C-terminus: DnaJ homolog subfamily B member 9 (223 aa).

Positions 1-23 (MATPQSIFIFAICILMITELILA) are cleaved as a signal peptide. The J domain occupies 26-90 (SYYDILGVPK…NRRKEYDTLG (65 aa)). The interval 91–223 (HSAFTNGKGQ…VTTYTDCSGQ (133 aa)) is divergent targeting domain. Serine 133 carries the phosphoserine modification.

As to quaternary structure, interacts with HSPA5/BiP; interaction is direct. Interacts with ERN1/IRE1 (via the luminal region). Interacts with DERL1.

It localises to the endoplasmic reticulum lumen. In terms of biological role, co-chaperone for Hsp70 protein HSPA5/BiP that acts as a key repressor of the ERN1/IRE1-mediated unfolded protein response (UPR). J domain-containing co-chaperones stimulate the ATPase activity of Hsp70 proteins and are required for efficient substrate recognition by Hsp70 proteins. In the unstressed endoplasmic reticulum, interacts with the luminal region of ERN1/IRE1 and selectively recruits HSPA5/BiP: HSPA5/BiP disrupts the dimerization of the active ERN1/IRE1 luminal region, thereby inactivating ERN1/IRE1. Also involved in endoplasmic reticulum-associated degradation (ERAD) of misfolded proteins. Required for survival of B-cell progenitors and normal antibody production. This chain is DnaJ homolog subfamily B member 9, found in Pongo abelii (Sumatran orangutan).